The sequence spans 294 residues: tRNA pseudouridine synthase A (294 aa).

Catalysis depends on D64, which acts as the Nucleophile. Y122 contributes to the substrate binding site.

The protein belongs to the tRNA pseudouridine synthase TruA family. Homodimer.

The enzyme catalyses uridine(38/39/40) in tRNA = pseudouridine(38/39/40) in tRNA. Functionally, formation of pseudouridine at positions 38, 39 and 40 in the anticodon stem and loop of transfer RNAs. This Synechococcus sp. (strain ATCC 27144 / PCC 6301 / SAUG 1402/1) (Anacystis nidulans) protein is tRNA pseudouridine synthase A.